Consider the following 260-residue polypeptide: Cytochrome c oxidase subunit 3 (260 aa).

Transmembrane regions (helical) follow at residues 30–50 (LILW…VLLV), 81–101 (GMIL…WAFF), 126–146 (FLVP…VTWA), 158–178 (AIQS…LQAW), 196–216 (FFVA…FLAV), and 239–259 (WYWH…YWWG).

The protein belongs to the cytochrome c oxidase subunit 3 family. In terms of assembly, component of the cytochrome c oxidase (complex IV, CIV), a multisubunit enzyme composed of a catalytic core of 3 subunits and several supernumerary subunits. The complex exists as a monomer or a dimer and forms supercomplexes (SCs) in the inner mitochondrial membrane with ubiquinol-cytochrome c oxidoreductase (cytochrome b-c1 complex, complex III, CIII).

The protein localises to the mitochondrion inner membrane. The catalysed reaction is 4 Fe(II)-[cytochrome c] + O2 + 8 H(+)(in) = 4 Fe(III)-[cytochrome c] + 2 H2O + 4 H(+)(out). In terms of biological role, component of the cytochrome c oxidase, the last enzyme in the mitochondrial electron transport chain which drives oxidative phosphorylation. The respiratory chain contains 3 multisubunit complexes succinate dehydrogenase (complex II, CII), ubiquinol-cytochrome c oxidoreductase (cytochrome b-c1 complex, complex III, CIII) and cytochrome c oxidase (complex IV, CIV), that cooperate to transfer electrons derived from NADH and succinate to molecular oxygen, creating an electrochemical gradient over the inner membrane that drives transmembrane transport and the ATP synthase. Cytochrome c oxidase is the component of the respiratory chain that catalyzes the reduction of oxygen to water. Electrons originating from reduced cytochrome c in the intermembrane space (IMS) are transferred via the dinuclear copper A center (CU(A)) of subunit 2 and heme A of subunit 1 to the active site in subunit 1, a binuclear center (BNC) formed by heme A3 and copper B (CU(B)). The BNC reduces molecular oxygen to 2 water molecules using 4 electrons from cytochrome c in the IMS and 4 protons from the mitochondrial matrix. The chain is Cytochrome c oxidase subunit 3 (COIII) from Pisaster ochraceus (Ochre sea star).